The sequence spans 161 residues: Cyclic pyranopterin monophosphate synthase (161 aa).

Substrate is bound by residues 78 to 80 (MCH) and 116 to 117 (ME). D131 is a catalytic residue.

The protein belongs to the MoaC family. In terms of assembly, homohexamer; trimer of dimers.

It catalyses the reaction (8S)-3',8-cyclo-7,8-dihydroguanosine 5'-triphosphate = cyclic pyranopterin phosphate + diphosphate. It functions in the pathway cofactor biosynthesis; molybdopterin biosynthesis. Its function is as follows. Catalyzes the conversion of (8S)-3',8-cyclo-7,8-dihydroguanosine 5'-triphosphate to cyclic pyranopterin monophosphate (cPMP). The sequence is that of Cyclic pyranopterin monophosphate synthase from Nitratidesulfovibrio vulgaris (strain ATCC 29579 / DSM 644 / CCUG 34227 / NCIMB 8303 / VKM B-1760 / Hildenborough) (Desulfovibrio vulgaris).